Reading from the N-terminus, the 1361-residue chain is DNA-directed RNA polymerase subunit beta (1361 aa).

The protein belongs to the RNA polymerase beta chain family. As to quaternary structure, the RNAP catalytic core consists of 2 alpha, 1 beta, 1 beta' and 1 omega subunit. When a sigma factor is associated with the core the holoenzyme is formed, which can initiate transcription.

The enzyme catalyses RNA(n) + a ribonucleoside 5'-triphosphate = RNA(n+1) + diphosphate. Functionally, DNA-dependent RNA polymerase catalyzes the transcription of DNA into RNA using the four ribonucleoside triphosphates as substrates. The sequence is that of DNA-directed RNA polymerase subunit beta from Cellvibrio japonicus (strain Ueda107) (Pseudomonas fluorescens subsp. cellulosa).